The primary structure comprises 67 residues: Alpha-toxin Cn12 (67 aa).

Positions 1–66 (RDGYPLASNG…WGDSGTGPCR (66 aa)) constitute an LCN-type CS-alpha/beta domain. Cystine bridges form between cysteine 11/cysteine 65, cysteine 15/cysteine 40, cysteine 25/cysteine 45, and cysteine 29/cysteine 47.

Expressed by the venom gland.

It localises to the secreted. Functionally, alpha toxins bind voltage-independently at site-3 of sodium channels (Nav) and inhibit the inactivation of the activated channels, thereby blocking neuronal transmission. This toxin binds, in vitro, to sodium channels and inhibits the inactivation of the activated channels. Seems not toxic to mice, crickets and sweet-water shrimps. The protein is Alpha-toxin Cn12 of Centruroides noxius (Mexican scorpion).